The primary structure comprises 852 residues: Disks large homolog 2 (852 aa).

S-palmitoyl cysteine attachment occurs at residues Cys-5 and Cys-7. At Ser-28 the chain carries Phosphoserine. Phosphotyrosine is present on Tyr-58. A Phosphoserine modification is found at Ser-65. PDZ domains are found at residues 98-184 (EITL…VRRR) and 193-279 (EIKL…VGKP). A phosphoserine mark is found at Ser-307, Ser-328, Ser-360, Ser-365, Ser-406, and Ser-414. The region spanning 421–501 (KVVLHKGSTG…QTVTIIAQYQ (81 aa)) is the PDZ 3 domain. Residue Tyr-505 is modified to Phosphotyrosine. Ser-528, Ser-530, and Ser-553 each carry phosphoserine. The SH3 domain occupies 536 to 606 (KRSLYVRAMF…PSKRRVERKE (71 aa)). A Guanylate kinase-like domain is found at 662 to 837 (TRPVIILGPM…IYNQCKLVIE (176 aa)). 2 positions are modified to phosphotyrosine: Tyr-732 and Tyr-737.

It belongs to the MAGUK family. Interacts through its PDZ domains with NETO1. Interacts with NOS1/nNOS through second PDZ domain. Interacts with KCNJ2/Kir2.1 (via C-terminus) through one of its PDZ domains. Interacts with KCNJ4. Interacts with FRMPD4 (via C-terminus). Interacts with LRFN1. Interacts with LRFN2 and LRFN4. Interacts with FASLG. Interacts with ADAM22. Interacts with DGKI (via PDZ-binding motif). Post-translationally, palmitoylation of isoform 1 and isoform 2 is not required for targeting to postsynaptic density. As to expression, detected in juxtaparanodal zones in the central nervous system and at nerve terminal plexuses of basket cells in the cerebellum (at protein level). Brain. High levels in cerebellar Purkinje cells. Expressed in pyramidal cells of the Ammons's horn and granular cells of the dentate gyrus in the hippocampus as well as cerebral cortex and striatum. High levels in dorsal horn of spinal cord.

It is found in the cell membrane. The protein localises to the postsynaptic density. It localises to the synapse. Its subcellular location is the cell projection. The protein resides in the axon. It is found in the membrane. The protein localises to the perikaryon. Required for perception of chronic pain through NMDA receptor signaling. Regulates surface expression of NMDA receptors in dorsal horn neurons of the spinal cord. Interacts with the cytoplasmic tail of NMDA receptor subunits as well as inward rectifying potassium channels. Involved in regulation of synaptic stability at cholinergic synapses. Part of the postsynaptic protein scaffold of excitatory synapses. The sequence is that of Disks large homolog 2 (Dlg2) from Rattus norvegicus (Rat).